Here is a 322-residue protein sequence, read N- to C-terminus: Glucokinase (322 aa).

Position 10 to 15 (10 to 15 (GDIGGT)) interacts with ATP.

The protein belongs to the bacterial glucokinase family.

It localises to the cytoplasm. The enzyme catalyses D-glucose + ATP = D-glucose 6-phosphate + ADP + H(+). In Hahella chejuensis (strain KCTC 2396), this protein is Glucokinase.